Consider the following 197-residue polypeptide: Dephospho-CoA kinase (197 aa).

One can recognise a DPCK domain in the interval 2–197; sequence IIGLTGGIAS…GAIKDLANLV (196 aa). Residue 10–15 participates in ATP binding; it reads ASGKST.

This sequence belongs to the CoaE family.

The protein resides in the cytoplasm. The catalysed reaction is 3'-dephospho-CoA + ATP = ADP + CoA + H(+). It functions in the pathway cofactor biosynthesis; coenzyme A biosynthesis; CoA from (R)-pantothenate: step 5/5. Catalyzes the phosphorylation of the 3'-hydroxyl group of dephosphocoenzyme A to form coenzyme A. The chain is Dephospho-CoA kinase from Streptococcus thermophilus (strain CNRZ 1066).